We begin with the raw amino-acid sequence, 627 residues long: uncharacterized protein (627 aa).

One can recognise a WH1 domain in the interval 21–136 (GISASDKILS…NSVCKRQTRS (116 aa)). Positions 310–347 (RGSLSTPRIPTHRDSYRSATKPDTVPKQTPPPTHNSYV) are disordered.

This is an uncharacterized protein from Caenorhabditis elegans.